We begin with the raw amino-acid sequence, 316 residues long: Methionyl-tRNA formyltransferase (316 aa).

113–116 (SLLP) lines the (6S)-5,6,7,8-tetrahydrofolate pocket.

This sequence belongs to the Fmt family.

It carries out the reaction L-methionyl-tRNA(fMet) + (6R)-10-formyltetrahydrofolate = N-formyl-L-methionyl-tRNA(fMet) + (6S)-5,6,7,8-tetrahydrofolate + H(+). In terms of biological role, attaches a formyl group to the free amino group of methionyl-tRNA(fMet). The formyl group appears to play a dual role in the initiator identity of N-formylmethionyl-tRNA by promoting its recognition by IF2 and preventing the misappropriation of this tRNA by the elongation apparatus. The polypeptide is Methionyl-tRNA formyltransferase (Sodalis glossinidius (strain morsitans)).